Here is a 147-residue protein sequence, read N- to C-terminus: Bis(5'-nucleosyl)-tetraphosphatase [asymmetrical] (147 aa).

An N-acetylalanine modification is found at Ala-2. A Nudix hydrolase domain is found at 2-139 (ALRACGLIIF…EMKAALQEGH (138 aa)). Positions 43-64 (GHVEPGESDLETALRETQEEAG) match the Nudix box motif.

This sequence belongs to the Nudix hydrolase family. A divalent metal cation serves as cofactor.

It carries out the reaction P(1),P(4)-bis(5'-guanosyl) tetraphosphate + H2O = GMP + GTP + 2 H(+). The catalysed reaction is a 5'-end CoA-ribonucleoside in mRNA + H2O = a 5'-end phospho-adenosine-phospho-ribonucleoside in mRNA + (R)-4'-phosphopantetheine + 2 H(+). It catalyses the reaction a 5'-end FAD-phospho-ribonucleoside in mRNA + H2O = a 5'-end phospho-adenosine-phospho-ribonucleoside in mRNA + FMN + 2 H(+). Its function is as follows. Catalyzes the asymmetric hydrolysis of diadenosine 5',5'''-P1,P4-tetraphosphate (Ap4A) to yield AMP and ATP. Exhibits decapping activity towards FAD-capped RNAs and dpCoA-capped RNAs in vitro. This chain is Bis(5'-nucleosyl)-tetraphosphatase [asymmetrical] (NUDT2), found in Bos taurus (Bovine).